Reading from the N-terminus, the 104-residue chain is ATP-dependent Clp protease adapter protein ClpS (104 aa).

This sequence belongs to the ClpS family. As to quaternary structure, binds to the N-terminal domain of the chaperone ClpA.

Involved in the modulation of the specificity of the ClpAP-mediated ATP-dependent protein degradation. This is ATP-dependent Clp protease adapter protein ClpS from Bordetella avium (strain 197N).